The chain runs to 350 residues: S-adenosylmethionine:tRNA ribosyltransferase-isomerase (350 aa).

It belongs to the QueA family. In terms of assembly, monomer.

The protein resides in the cytoplasm. The enzyme catalyses 7-aminomethyl-7-carbaguanosine(34) in tRNA + S-adenosyl-L-methionine = epoxyqueuosine(34) in tRNA + adenine + L-methionine + 2 H(+). The protein operates within tRNA modification; tRNA-queuosine biosynthesis. Its function is as follows. Transfers and isomerizes the ribose moiety from AdoMet to the 7-aminomethyl group of 7-deazaguanine (preQ1-tRNA) to give epoxyqueuosine (oQ-tRNA). This chain is S-adenosylmethionine:tRNA ribosyltransferase-isomerase, found in Vibrio parahaemolyticus serotype O3:K6 (strain RIMD 2210633).